We begin with the raw amino-acid sequence, 124 residues long: MPTINQLIRKPRKSQTEKTASPALQNCPQRRGICTRVMTVTPKKPNSALRKVARVRLSNGFEVTAYIPGIGHNLQEHSVVLIRGGRVKDLPGVRYHIVRGAKDTLGVNNRKKGRSKYGTKKPKA.

The segment at 1–27 (MPTINQLIRKPRKSQTEKTASPALQNC) is disordered. Polar residues predominate over residues 17-27 (EKTASPALQNC). Position 89 is a 3-methylthioaspartic acid (Asp89).

The protein belongs to the universal ribosomal protein uS12 family. Part of the 30S ribosomal subunit. Contacts proteins S8 and S17. May interact with IF1 in the 30S initiation complex.

Functionally, with S4 and S5 plays an important role in translational accuracy. Its function is as follows. Interacts with and stabilizes bases of the 16S rRNA that are involved in tRNA selection in the A site and with the mRNA backbone. Located at the interface of the 30S and 50S subunits, it traverses the body of the 30S subunit contacting proteins on the other side and probably holding the rRNA structure together. The combined cluster of proteins S8, S12 and S17 appears to hold together the shoulder and platform of the 30S subunit. In Borreliella afzelii (strain PKo) (Borrelia afzelii), this protein is Small ribosomal subunit protein uS12.